A 411-amino-acid polypeptide reads, in one-letter code: G2/mitotic-specific cyclin cig2 (411 aa).

Residues 51–60 (RTVLSDVSNV) carry the Destruction box motif. Residues 57 to 89 (VSNVGKNNADEKDTKKAKRSFDESNLSTNEEAD) form a disordered region. Positions 64–78 (NADEKDTKKAKRSFD) are enriched in basic and acidic residues. The Cyclin N-terminal domain occupies 139–265 (EIFEYIRKLD…MLNVLNFDLS (127 aa)). Residues 181 to 273 (SNFCLMPETL…LSYPSPLNFL (93 aa)) are interaction with pop1.

Belongs to the cyclin family. Cyclin AB subfamily. In terms of assembly, associates with cdc2, res2 and rum1. Interacts with pop1 only when phosphorylated. Post-translationally, phosphorylated.

It is found in the nucleus. The protein localises to the cytoplasm. The protein resides in the cytoskeleton. Its subcellular location is the microtubule organizing center. It localises to the spindle pole body. Essential for the control of the cell cycle at the G2/M and G1/S (mitosis) transition. Interacts with the cdc2 protein kinase to form MPF. Interaction with res2 promotes the phosphorylation of res1 and inhibits MBF-dependent gene transcription. Forms an autoregulating feedback-inhibition loop with MBF which is important for normal regulation of the cell cycle. G2/M cyclins accumulate steadily during G2 and are abruptly destroyed at mitosis. Negatively regulates conjugation via interacting with cell cycle 'start' genes. Degraded by skp1, pop1 and pop2 in the G2 and M phases of the cell cycle. The chain is G2/mitotic-specific cyclin cig2 (cig2) from Schizosaccharomyces pombe (strain 972 / ATCC 24843) (Fission yeast).